The following is a 591-amino-acid chain: L-fucose isomerase (591 aa).

Residues Glu-337 and Asp-361 each act as proton acceptor in the active site. Residues Glu-337, Asp-361, and His-528 each contribute to the Mn(2+) site.

It belongs to the L-fucose isomerase family. Homohexamer. It depends on Mn(2+) as a cofactor.

The protein resides in the cytoplasm. The catalysed reaction is L-fucose = L-fuculose. The protein operates within carbohydrate degradation; L-fucose degradation; L-lactaldehyde and glycerone phosphate from L-fucose: step 1/3. Functionally, converts the aldose L-fucose into the corresponding ketose L-fuculose. The polypeptide is L-fucose isomerase (Salmonella paratyphi A (strain ATCC 9150 / SARB42)).